The chain runs to 288 residues: Protein sprouty homolog 3 (288 aa).

One can recognise an SPR domain in the interval 154 to 260 (KCVPCTAARP…GYDSLRRPGC (107 aa)).

It belongs to the sprouty family. As to quaternary structure, interacts with TESK1. Interacts with USP11. Interacts with CAV1 (via C-terminus). In terms of tissue distribution, widely expressed; particularly in the fetal tissues. Expressed in the brain with expression the highest in Purkinje cells in the cerebellum (at protein level). Expressed in the myocardium of the heart.

It localises to the cytoplasm. In terms of biological role, inhibits neurite branching, arbor length and neurite complexity. Inhibits EGF-mediated p42/44 ERK signaling. Negatively regulates the MAPK cascade, resulting in a reduction of extracellular matrix protein accumulation. May function as an antagonist of fibroblast growth factor (FGF) pathways and may negatively modulate respiratory organogenesis. The protein is Protein sprouty homolog 3 of Homo sapiens (Human).